The chain runs to 452 residues: Pup--protein ligase (452 aa).

Glutamate 9 provides a ligand contact to Mg(2+). Arginine 53 lines the ATP pocket. Tyrosine 55 contacts Mg(2+). Aspartate 57 functions as the Proton acceptor in the catalytic mechanism. Position 63 (glutamate 63) interacts with Mg(2+). ATP contacts are provided by threonine 66 and tryptophan 419.

Belongs to the Pup ligase/Pup deamidase family. Pup-conjugating enzyme subfamily.

It catalyses the reaction ATP + [prokaryotic ubiquitin-like protein]-L-glutamate + [protein]-L-lysine = ADP + phosphate + N(6)-([prokaryotic ubiquitin-like protein]-gamma-L-glutamyl)-[protein]-L-lysine.. The protein operates within protein degradation; proteasomal Pup-dependent pathway. Its pathway is protein modification; protein pupylation. Catalyzes the covalent attachment of the prokaryotic ubiquitin-like protein modifier Pup to the proteasomal substrate proteins, thereby targeting them for proteasomal degradation. This tagging system is termed pupylation. The ligation reaction involves the side-chain carboxylate of the C-terminal glutamate of Pup and the side-chain amino group of a substrate lysine. The chain is Pup--protein ligase from Mycolicibacterium vanbaalenii (strain DSM 7251 / JCM 13017 / BCRC 16820 / KCTC 9966 / NRRL B-24157 / PYR-1) (Mycobacterium vanbaalenii).